A 461-amino-acid chain; its full sequence is Photosystem II CP43 reaction center protein (461 aa).

A propeptide spanning residues 1–2 is cleaved from the precursor; it reads ME. An N-acetylthreonine modification is found at Thr-3. Thr-3 carries the phosphothreonine modification. A run of 5 helical transmembrane segments spans residues 57 to 81, 122 to 143, 166 to 188, 243 to 263, and 279 to 300; these read LFEV…PHLA, LAGP…KRKK, KAMY…RSIT, RPSP…LSYS, and WFNN…ASQA. Glu-355 contributes to the [CaMn4O5] cluster binding site. A helical transmembrane segment spans residues 435–459; it reads RARAAAIGFEKGIDRSREIARKLKP.

The protein belongs to the PsbB/PsbC family. PsbC subfamily. PSII is composed of 1 copy each of membrane proteins PsbA, PsbB, PsbC, PsbD, PsbE, PsbF, PsbH, PsbI, PsbJ, PsbK, PsbL, PsbM, PsbT, PsbY, PsbZ, Psb30/Ycf12, at least 3 peripheral proteins of the oxygen-evolving complex and a large number of cofactors. It forms dimeric complexes. Binds multiple chlorophylls and provides some of the ligands for the Ca-4Mn-5O cluster of the oxygen-evolving complex. It may also provide a ligand for a Cl- that is required for oxygen evolution. PSII binds additional chlorophylls, carotenoids and specific lipids. is required as a cofactor.

It localises to the plastid. The protein resides in the chloroplast thylakoid membrane. Its function is as follows. One of the components of the core complex of photosystem II (PSII). It binds chlorophyll and helps catalyze the primary light-induced photochemical processes of PSII. PSII is a light-driven water:plastoquinone oxidoreductase, using light energy to abstract electrons from H(2)O, generating O(2) and a proton gradient subsequently used for ATP formation. This chain is Photosystem II CP43 reaction center protein, found in Euglena gracilis.